Consider the following 351-residue polypeptide: MLPEDRLIQIVERFEYLEARLNAGPAAEEIAAISREYAELKPVVAQIAQWRSVQEDIRQAQAMLADHEMRELAQDELSRLRAGLPALEHALRVALLPRDAADARPAILEIRPGTGGEEAALFAGDLLDMYRRFAESQGWQFQMLELVRSDLGGVREAMARIEGEGVFARLKYESGVHRVQRVPETESGGRIHTSAATVAVLPEAEEVDVDIPAADIRIDTMRASGAGGQHVNTTDSAVRITHLPTGIVVTSSEKSQHQNRANAMAVLRARLYDMERSRADAERAADRKSQVGSGDRSERIRTYNFPQGRMTDHRIGLTLYALDRIMQGEIGEIVEALAAHDQAARLAAQGE.

N5-methylglutamine is present on Gln-229. Positions 279–300 (ADAERAADRKSQVGSGDRSERI) are disordered.

It belongs to the prokaryotic/mitochondrial release factor family. Methylated by PrmC. Methylation increases the termination efficiency of RF1.

The protein resides in the cytoplasm. Peptide chain release factor 1 directs the termination of translation in response to the peptide chain termination codons UAG and UAA. In Paracoccus denitrificans (strain Pd 1222), this protein is Peptide chain release factor 1.